A 530-amino-acid chain; its full sequence is Growth-regulating factor 1 (530 aa).

A disordered region spans residues 1–41 (MDLGVRVSGHETVSSPGQTELGSGFSNKQERSGFDGEDCWR). Residues 11-27 (ETVSSPGQTELGSGFSN) are compositionally biased toward polar residues. Residues 28–41 (KQERSGFDGEDCWR) are compositionally biased toward basic and acidic residues. Residues 133–168 (PFSLTQWAELEQQALIYKYITANVPVPSSLLLSLKK) form the QLQ domain. A WRC domain is found at 196–240 (DPEPGRCRRTDGKKWRCSRDAVPDQKYCERHINRGRHRSRKPVEG). 2 consecutive short sequence motifs (bipartite nuclear localization signal) follow at residues 201–211 (RCRRTDGKKWR) and 229–236 (RGRHRSRK). Disordered stretches follow at residues 223 to 250 (CERH…NAAA) and 485 to 530 (STFG…APSL). A compositionally biased stretch (low complexity) spans 485–508 (STFGSLSNSSSASSTIIGDNNNKN). Positions 519–530 (TLMNTSATAPSL) are enriched in polar residues.

Belongs to the GRF family. In terms of assembly, interacts with GIF1 and GIF2. Strongly expressed in actively growing and developing tissues, such as roots, upper stems, and shoot tips containing the shoot apical meristem (SAM) and flower buds. Also expressed in mature flowers, but weakly expressed in mature stems and leaves.

It is found in the nucleus. Transcription activator that plays a role in the regulation of cell expansion in leaf and cotyledons tissues. Component of a network formed by miR396, the GRFs and their interacting factors (GIFs) acting in the regulation of meristem function, at least partially through the control of cell proliferation. microRNA396-GRF1/GRF3 regulatory module acts as a developmental regulator in the reprogramming of root cells during cyst nematode infection, leading to the formation of the syncytium. This chain is Growth-regulating factor 1 (GRF1), found in Arabidopsis thaliana (Mouse-ear cress).